We begin with the raw amino-acid sequence, 394 residues long: MGAAFKWGAAARKTVFPLFYFLIFFAFGALFPLLSVYLQEEARLSGAAIGWIMSLPPIVTMAAQPLWGTAADYTRKPVGLLLAALVLAALFGVMYALAGSYRLFVVLTVLLSAMQSAIVPLSDSLALRHVHEQGGNYGAIRLWGSLGFAMAVLAVGWLSDHIAFAVIFYAFSLALLTAAALATRLPRYPMGAPGALTRQDVRGLLASRPFRLLLVATFLLFGPILANNSYFGLLIHELGGTLTGIGLAFLFAAGSEAPFMKAADRLIGRFGMVRLLLLAALISAARWLAYAADPPLWFVYMTTVVQGCSVGLAIPTALQYARRLAPERVQSTAVALYSAVGNGLGAWFCTLVGGYLLERWQIGAVYLFFSICTIVGVLVLLLLAKRERTAGEEK.

At 1 to 11 the chain is on the cytoplasmic side; the sequence is MGAAFKWGAAA. The chain crosses the membrane as a helical span at residues 12-38; the sequence is RKTVFPLFYFLIFFAFGALFPLLSVYL. The Extracellular segment spans residues 39–45; that stretch reads QEEARLS. Residues 46-74 form a helical membrane-spanning segment; the sequence is GAAIGWIMSLPPIVTMAAQPLWGTAADYT. Over 75-78 the chain is Cytoplasmic; the sequence is RKPV. A helical membrane pass occupies residues 79-104; the sequence is GLLLAALVLAALFGVMYALAGSYRLF. The Extracellular segment spans residues 105 to 108; it reads VVLT. The helical transmembrane segment at 109 to 126 threads the bilayer; it reads VLLSAMQSAIVPLSDSLA. Over 127-137 the chain is Cytoplasmic; the sequence is LRHVHEQGGNY. The chain crosses the membrane as a helical span at residues 138–160; it reads GAIRLWGSLGFAMAVLAVGWLSD. Over 161–163 the chain is Extracellular; sequence HIA. The helical transmembrane segment at 164-183 threads the bilayer; it reads FAVIFYAFSLALLTAAALAT. Topologically, residues 184 to 213 are cytoplasmic; the sequence is RLPRYPMGAPGALTRQDVRGLLASRPFRLL. The chain crosses the membrane as a helical span at residues 214–233; sequence LVATFLLFGPILANNSYFGL. Residues 234–237 are Extracellular-facing; sequence LIHE. A helical transmembrane segment spans residues 238-262; it reads LGGTLTGIGLAFLFAAGSEAPFMKA. The Cytoplasmic portion of the chain corresponds to 263–272; it reads ADRLIGRFGM. Residues 273-292 form a helical membrane-spanning segment; that stretch reads VRLLLLAALISAARWLAYAA. At 293–295 the chain is on the extracellular side; that stretch reads DPP. The helical transmembrane segment at 296-318 threads the bilayer; the sequence is LWFVYMTTVVQGCSVGLAIPTAL. The Cytoplasmic portion of the chain corresponds to 319–330; it reads QYARRLAPERVQ. The helical transmembrane segment at 331 to 358 threads the bilayer; the sequence is STAVALYSAVGNGLGAWFCTLVGGYLLE. Residues 359–361 lie on the Extracellular side of the membrane; it reads RWQ. A helical membrane pass occupies residues 362 to 382; the sequence is IGAVYLFFSICTIVGVLVLLL. Residues 383–394 are Cytoplasmic-facing; sequence LAKRERTAGEEK.

It belongs to the major facilitator superfamily.

Its subcellular location is the cell membrane. High affinity transport of maltose. This chain is Maltose permease (malA), found in Geobacillus stearothermophilus (Bacillus stearothermophilus).